A 166-amino-acid polypeptide reads, in one-letter code: Replication restart protein DnaT (166 aa).

Belongs to the DnaT family. Homooligomerizes. Interacts with PriB. Component of the replication restart primosome. Primosome assembly occurs via a 'hand-off' mechanism. PriA binds to replication forks, subsequently PriB then DnaT bind; DnaT then displaces ssDNA to generate the helicase loading substrate.

In terms of biological role, involved in the restart of stalled replication forks, which reloads the replicative helicase on sites other than the origin of replication. Can function in multiple replication restart pathways. Displaces ssDNA from a PriB-ssDNA complex. Probably forms a spiral filament on ssDNA. This chain is Replication restart protein DnaT, found in Buchnera aphidicola subsp. Schizaphis graminum (strain Sg).